The following is a 264-amino-acid chain: MNSLQLAREAASAARTRYRQGFVAPTAGEAPGLTQCNMITLPREWAYDFLLFAQRNPQACPVLDVTEPGSHTTLLAEQADLRTDLPLYRVWRDGQLAEELSDVSHIWAQHTDLVSFLIGCSFTFETDLMHAGIDVRHISEGCNVPMYRSNRVCRPAGRLQGNMVVSMRPIAADRVAEAARITGRYPGVHGAPVHVGEPELLGINDLANPDFGDAVTIRPGEIPVFWACGVTPQAVVMASRVPFAISHAPGHMFITDIPDSYYHV.

Belongs to the D-glutamate cyclase family.

In Pseudomonas syringae pv. syringae (strain B728a), this protein is Putative hydro-lyase Psyr_0498.